Consider the following 250-residue polypeptide: Cell division protein ZapD (250 aa).

Belongs to the ZapD family. As to quaternary structure, interacts with FtsZ.

The protein localises to the cytoplasm. Cell division factor that enhances FtsZ-ring assembly. Directly interacts with FtsZ and promotes bundling of FtsZ protofilaments, with a reduction in FtsZ GTPase activity. The chain is Cell division protein ZapD from Yersinia pestis bv. Antiqua (strain Antiqua).